An 853-amino-acid polypeptide reads, in one-letter code: Neural cell adhesion molecule 1 (853 aa).

The first 19 residues, Met1–Ser19, serve as a signal peptide directing secretion. 5 Ig-like C2-type domains span residues Leu20–Asn111, Gln116–Gln205, Pro212–His300, Pro307–Gln412, and Pro415–Glu500. Residues Leu20 to Thr719 are Extracellular-facing. 2 cysteine pairs are disulfide-bonded: Cys41-Cys96 and Cys139-Cys189. Heparin is bound by residues Lys152–Arg156 and Lys161–Arg165. Asn222 carries an N-linked (GlcNAc...) asparagine glycan. A disulfide bridge links Cys235 with Cys286. 5 N-linked (GlcNAc...) asparagine glycosylation sites follow: Asn314, Asn346, Asn432, Asn458, and Asn487. Residues Cys328 and Cys394 are joined by a disulfide bond. Cysteines 435 and 488 form a disulfide. Fibronectin type-III domains lie at Thr508–Val607 and Glu609–Pro704. Residues Gly720 to Val737 traverse the membrane as a helical segment. The Cytoplasmic portion of the chain corresponds to Asp738–Ala853. Residues Gly764 to Ala853 are disordered. 2 stretches are compositionally biased toward basic and acidic residues: residues Lys766–Pro807 and Glu815–Thr829. Residues Ser778 and Ser782 each carry the phosphoserine modification. The span at Thr838–Ala853 shows a compositional bias: polar residues.

Interacts with MDK. Found in a complex with SLC39A6, SLC39A10 and with NCAM1; this complex controls NCAM1 phosphorylation and integration into focal adhesion complexes during epithelial-tomesenchymal transition. Interacts with synaptic plasticity regulator PANTS. Post-translationally, polysialylated by ST8SIA2 and ST8SIA4. Polysialylation modulates cell interactions by confering both attractive and repulsive properties that are highly regulated by ST8SIA2 and ST8SIA4. Polysialylation is formed on a-2,3-linked sialic acid of core glycans.

It is found in the cell membrane. This protein is a cell adhesion molecule involved in neuron-neuron adhesion, neurite fasciculation, outgrowth of neurites, etc. The polypeptide is Neural cell adhesion molecule 1 (Bos taurus (Bovine)).